The chain runs to 529 residues: Amino acid transporter heavy chain SLC3A2 (529 aa).

Residues 1–20 are disordered; that stretch reads MSQDTEVDMKEVELNELEPE. Residues 1–84 are Cytoplasmic-facing; sequence MSQDTEVDMK…SPGWVRTRWA (84 aa). A Phosphoserine modification is found at serine 2. Threonine 5 is subject to Phosphothreonine. The span at 7–20 shows a compositional bias: basic and acidic residues; the sequence is VDMKEVELNELEPE. Lysine 49 participates in a covalent cross-link: Glycyl lysine isopeptide (Lys-Gly) (interchain with G-Cter in ubiquitin). Position 65 is a phosphoserine (serine 65). A Glycyl lysine isopeptide (Lys-Gly) (interchain with G-Cter in SUMO2) cross-link involves residue lysine 66. Residues 85–105 form a helical; Signal-anchor for type II membrane protein membrane-spanning segment; that stretch reads LLLLFWLGWIGMLAGAVVIIV. The Extracellular segment spans residues 106–529; sequence RAPRCRELPV…GLLLHFPYVA (424 aa). N-linked (GlcNAc...) asparagine glycosylation is present at asparagine 266. A phosphoserine mark is found at serine 307 and serine 309. N-linked (GlcNAc...) asparagine glycosylation is found at asparagine 325 and asparagine 405. Serine 426 carries the phosphoserine modification.

The protein belongs to the SLC3A transporter family. As to quaternary structure, disulfide-linked heterodimer with a non-glycosylated light chain (SLC7A5, SLC7A6, SLC7A7, SLC7A8, SLC7A10 or SLC7A11). Interacts with TLCD3A/CT120 and ICAM1. Constitutively and specifically associates with beta-1 integrins (alpha-2/beta-1, alpha-3/beta-1, alpha-5/beta-1 and alpha-6/beta-1), but minimally with alpha-4/beta-1. Interacts with LAPTM4B; recruits SLC3A2 and SLC7A5 to lysosomes to promote leucine uptake into these organelles and is required for mTORC1 activation. In terms of processing, phosphorylation on Ser-307 or Ser-309 and on Ser-426 by ecto-protein kinases favors heterotypic cell-cell interactions. N-glycosylated; N-glycosylation is crucial for trafficking and stability of SLC3A2 to the plasma membrane.

Its subcellular location is the apical cell membrane. It is found in the cell membrane. The protein localises to the cell junction. The protein resides in the lysosome membrane. It localises to the melanosome. Its subcellular location is the basolateral cell membrane. In terms of biological role, acts as a chaperone that facilitates biogenesis and trafficking of functional transporters heterodimers to the plasma membrane. Forms heterodimer with SLC7 family transporters (SLC7A5, SLC7A6, SLC7A7, SLC7A8, SLC7A10 and SLC7A11), a group of amino-acid antiporters. Heterodimers function as amino acids exchangers, the specificity of the substrate depending on the SLC7A subunit. Heterodimers formed by SLC3A2/SLC7A6 or SLC3A2/SLC7A7 mediate the uptake of dibasic amino acids. Heterodimer SLC3A2/SLC7A11 functions as an antiporter by mediating the exchange of extracellular anionic L-cystine and intracellular L-glutamate across the cellular plasma membrane. SLC3A2/SLC7A10 translocates small neutral L- and D-amino acids across the plasma membrane. SLC3A2/SLC75 or SLC3A2/SLC7A8 translocates neutral amino acids with broad specificity, thyroid hormones and L-DOPA. SLC3A2 is essential for plasma membrane localization, stability, and the transport activity of SLC7A5 and SLC7A8. When associated with LAPTM4B, the heterodimer SLC7A5 is recruited to lysosomes to promote leucine uptake into these organelles, and thereby mediates mTORC1 activation. Modulates integrin-related signaling and is essential for integrin-dependent cell spreading, migration and tumor progression. The protein is Amino acid transporter heavy chain SLC3A2 of Oryctolagus cuniculus (Rabbit).